The sequence spans 422 residues: Tryptophan synthase beta chain (422 aa).

Lys-87 carries the post-translational modification N6-(pyridoxal phosphate)lysine.

The protein belongs to the TrpB family. In terms of assembly, tetramer of two alpha and two beta chains. It depends on pyridoxal 5'-phosphate as a cofactor.

The enzyme catalyses (1S,2R)-1-C-(indol-3-yl)glycerol 3-phosphate + L-serine = D-glyceraldehyde 3-phosphate + L-tryptophan + H2O. It functions in the pathway amino-acid biosynthesis; L-tryptophan biosynthesis; L-tryptophan from chorismate: step 5/5. The beta subunit is responsible for the synthesis of L-tryptophan from indole and L-serine. This Haloferax volcanii (strain ATCC 29605 / DSM 3757 / JCM 8879 / NBRC 14742 / NCIMB 2012 / VKM B-1768 / DS2) (Halobacterium volcanii) protein is Tryptophan synthase beta chain (trpB).